A 504-amino-acid polypeptide reads, in one-letter code: Activin receptor type-1 (504 aa).

A signal peptide spans 1 to 16; sequence MALPVLLLLLALPSRS. Residues 17–119 lie on the Extracellular side of the membrane; the sequence is VQDEELKLNE…EAAGYSMETL (103 aa). N-linked (GlcNAc...) asparagine glycosylation occurs at Asn94. A helical transmembrane segment spans residues 120–140; it reads IIVILAPVVVLVIFSVVAVLI. The Cytoplasmic segment spans residues 141–504; the sequence is IRRIQKNHME…NSLDKLKADC (364 aa). The 30-residue stretch at 173–202 folds into the GS domain; it reads STLADLLDHSCTSGSGSGLPFLVQRTVARQ. Residues 203 to 497 enclose the Protein kinase domain; sequence ITLVECVGKG…KTLTKIDNSL (295 aa). ATP is bound by residues 209 to 217 and Lys230; that span reads VGKGRYGEV. Asp331 serves as the catalytic Proton acceptor.

Belongs to the protein kinase superfamily. TKL Ser/Thr protein kinase family. TGFB receptor subfamily. Mg(2+) serves as cofactor. The cofactor is Mn(2+).

The protein localises to the membrane. The catalysed reaction is L-threonyl-[receptor-protein] + ATP = O-phospho-L-threonyl-[receptor-protein] + ADP + H(+). It catalyses the reaction L-seryl-[receptor-protein] + ATP = O-phospho-L-seryl-[receptor-protein] + ADP + H(+). Its function is as follows. On ligand binding, forms a receptor complex consisting of two type II and two type I transmembrane serine/threonine kinases. Type II receptors phosphorylate and activate type I receptors which autophosphorylate, then bind and activate SMAD transcriptional regulators. Receptor for activin. This chain is Activin receptor type-1 (ACVR1), found in Gallus gallus (Chicken).